Reading from the N-terminus, the 87-residue chain is Potassium channel toxin Ttr-beta-KTx (87 aa).

An N-terminal signal peptide occupies residues 1–19 (MERKWALLLFLGMVTLVSC). Residues 20 to 27 (GLREKHVQ) constitute a propeptide that is removed on maturation. The BetaSPN-type CS-alpha/beta domain maps to 53–87 (QFGCPAYEGYCNNHCQDIKRKDGECHGFKCKCAKD). 3 cysteine pairs are disulfide-bonded: cysteine 56–cysteine 77, cysteine 63–cysteine 82, and cysteine 67–cysteine 84.

The protein belongs to the long chain scorpion toxin family. Class 1 subfamily. Expressed by the venom gland.

The protein localises to the secreted. Inhibits voltage-gated potassium channel. In Tityus trivittatus (Argentinean scorpion), this protein is Potassium channel toxin Ttr-beta-KTx.